Reading from the N-terminus, the 55-residue chain is Large ribosomal subunit protein uL30 (55 aa).

It belongs to the universal ribosomal protein uL30 family. Part of the 50S ribosomal subunit.

In terms of biological role, binds the 5S and 23S rRNAs. This is Large ribosomal subunit protein uL30 from Deinococcus radiodurans (strain ATCC 13939 / DSM 20539 / JCM 16871 / CCUG 27074 / LMG 4051 / NBRC 15346 / NCIMB 9279 / VKM B-1422 / R1).